The chain runs to 154 residues: MIYREMLKSKIHRAVVRQADLHYVGSITIDATLMAAAGLWPGEKVDVLDITNGARLSTYVIEGEADSGTIGINGAAAHLISPGDLVIIVGYALMAEEDARSYQPNVVFVNGDNQLVRMGTDPAEAYDGVGLVRGDTNSPQPSLSEQAGDPRRAQ.

The Schiff-base intermediate with substrate; via pyruvic acid role is filled by Ser-26. Position 26 is a pyruvic acid (Ser) (Ser-26). Residue Thr-58 participates in substrate binding. The active-site Proton donor is the Tyr-59. 74 to 76 (GAA) lines the substrate pocket. The interval 129 to 154 (VGLVRGDTNSPQPSLSEQAGDPRRAQ) is disordered. Polar residues predominate over residues 135–145 (DTNSPQPSLSE).

It belongs to the PanD family. As to quaternary structure, heterooctamer of four alpha and four beta subunits. The cofactor is pyruvate. Post-translationally, is synthesized initially as an inactive proenzyme, which is activated by self-cleavage at a specific serine bond to produce a beta-subunit with a hydroxyl group at its C-terminus and an alpha-subunit with a pyruvoyl group at its N-terminus.

It is found in the cytoplasm. The catalysed reaction is L-aspartate + H(+) = beta-alanine + CO2. It participates in cofactor biosynthesis; (R)-pantothenate biosynthesis; beta-alanine from L-aspartate: step 1/1. Its function is as follows. Catalyzes the pyruvoyl-dependent decarboxylation of aspartate to produce beta-alanine. This chain is Aspartate 1-decarboxylase 1, found in Frankia casuarinae (strain DSM 45818 / CECT 9043 / HFP020203 / CcI3).